We begin with the raw amino-acid sequence, 457 residues long: Oxygen-independent coproporphyrinogen III oxidase (457 aa).

The 234-residue stretch at 47 to 280 (RYPERPLSLY…QETIVSLTQA (234 aa)) folds into the Radical SAM core domain. Residue Tyr-56 participates in S-adenosyl-L-methionine binding. Residues Cys-62 and Cys-66 each coordinate [4Fe-4S] cluster. Phe-68 lines the S-adenosyl-L-methionine pocket. A [4Fe-4S] cluster-binding site is contributed by Cys-69. S-adenosyl-L-methionine contacts are provided by residues Gly-112, 113–114 (GT), Glu-145, Gln-172, Arg-184, Asp-209, Ala-243, and Ile-329.

The protein belongs to the anaerobic coproporphyrinogen-III oxidase family. Monomer. [4Fe-4S] cluster serves as cofactor.

The protein localises to the cytoplasm. The catalysed reaction is coproporphyrinogen III + 2 S-adenosyl-L-methionine = protoporphyrinogen IX + 2 5'-deoxyadenosine + 2 L-methionine + 2 CO2. The protein operates within porphyrin-containing compound metabolism; protoporphyrin-IX biosynthesis; protoporphyrinogen-IX from coproporphyrinogen-III (AdoMet route): step 1/1. In terms of biological role, involved in the heme biosynthesis. Catalyzes the anaerobic oxidative decarboxylation of propionate groups of rings A and B of coproporphyrinogen III to yield the vinyl groups in protoporphyrinogen IX. This chain is Oxygen-independent coproporphyrinogen III oxidase (hemN), found in Salmonella typhi.